The chain runs to 60 residues: UPF0434 protein Rfer_3156 (60 aa).

The protein belongs to the UPF0434 family.

This chain is UPF0434 protein Rfer_3156, found in Albidiferax ferrireducens (strain ATCC BAA-621 / DSM 15236 / T118) (Rhodoferax ferrireducens).